We begin with the raw amino-acid sequence, 141 residues long: Mu-like prophage FluMu protein gp36 (141 aa).

This sequence to phage Mu protein gp36.

This is Mu-like prophage FluMu protein gp36 from Haemophilus influenzae (strain ATCC 51907 / DSM 11121 / KW20 / Rd).